A 666-amino-acid chain; its full sequence is NAD(P)H-quinone oxidoreductase subunit 5, organellar chromatophore 1 (666 aa).

15 helical membrane-spanning segments follow: residues Leu-8 to Ile-28, Ala-41 to Ala-61, Val-90 to Val-110, Ser-121 to Leu-141, Leu-145 to Phe-165, Phe-190 to Ala-210, Gly-220 to Ala-240, Thr-259 to Ala-279, Ile-293 to Gln-313, Leu-328 to Ile-348, Gly-396 to Trp-416, Ser-428 to Phe-448, Thr-497 to Trp-517, Phe-542 to Ile-562, and Gly-643 to Phe-663.

It belongs to the complex I subunit 5 family. As to quaternary structure, NDH is composed of at least 16 different subunits, 5 of which are encoded in the nucleus.

The protein localises to the plastid. The protein resides in the organellar chromatophore thylakoid membrane. The enzyme catalyses a plastoquinone + NADH + (n+1) H(+)(in) = a plastoquinol + NAD(+) + n H(+)(out). It catalyses the reaction a plastoquinone + NADPH + (n+1) H(+)(in) = a plastoquinol + NADP(+) + n H(+)(out). In terms of biological role, NDH shuttles electrons from NAD(P)H:plastoquinone, via FMN and iron-sulfur (Fe-S) centers, to quinones in the photosynthetic chain and possibly in a chloroplast respiratory chain. The immediate electron acceptor for the enzyme in this species is believed to be plastoquinone. Couples the redox reaction to proton translocation, and thus conserves the redox energy in a proton gradient. In Paulinella chromatophora, this protein is NAD(P)H-quinone oxidoreductase subunit 5, organellar chromatophore 1 (ndhF1).